The primary structure comprises 140 residues: Small ribosomal subunit protein eS12 (140 aa).

The protein belongs to the eukaryotic ribosomal protein eS12 family. Part of the small subunit (SSU) processome, composed of more than 70 proteins and the RNA chaperone small nucleolar RNA (snoRNA) U3. Subunit of the 40S ribosomal complex.

The protein localises to the nucleus. Its subcellular location is the nucleolus. Its function is as follows. Part of the small subunit (SSU) processome, first precursor of the small eukaryotic ribosomal subunit. During the assembly of the SSU processome in the nucleolus, many ribosome biogenesis factors, an RNA chaperone and ribosomal proteins associate with the nascent pre-rRNA and work in concert to generate RNA folding, modifications, rearrangements and cleavage as well as targeted degradation of pre-ribosomal RNA by the RNA exosome. Subunit of the 40S ribosomal complex. Involved in cold-warm shock-induced translocation of the RNA exosome components from the nucleolus to nucleoplasm. In Caenorhabditis elegans, this protein is Small ribosomal subunit protein eS12 (rps-12).